We begin with the raw amino-acid sequence, 481 residues long: MSSLMEFQDRNTTNNETEHQKSITDQSSSVPAGVILPPPAIREIIDKSASYVARNGPAFEEKIRQNEQANTKFAFLHANDPYHPYYQHKLTEAREGKLKSHATGLSTQKTSTLARPIQKPIEATIPAPSPYLFSEPLPSISSLDLDVLRLTARYAAVRGSSFLVSLSQKEWNNTQFDFLKPNNALYPYFMRIVQQYTSLIREPISSPEQELRENVRDPYSLLSKIQPRVRWQSHMESQKKKQKEEAEKEKLEYAQIDWNDFVVVEVIQFTKSDEHAKLAKPTNLADLQTATLEQKSAMFTMPDQNYTIEEAPPTAEPWEPISAPKKQEFGVSLPPSLASPEKGGISSTTSVSPAAQASPVLSTTTQPKVQKPVPKAFQPKVPMEISPFSGELVPATELEEHMRLKLLDPRWQEQRKVEESRKSTLNLENVNVAANMKRLVSQRTDLFDVQNGVEISQEEIERRKRAATQSAWGATPTNKRR.

Residues 1–15 (MSSLMEFQDRNTTNN) are compositionally biased toward polar residues. The segment at 1–34 (MSSLMEFQDRNTTNNETEHQKSITDQSSSVPAGV) is disordered. SURP motif repeat units lie at residues 44–86 (IIDK…HPYY) and 147–189 (VLRL…YPYF). Disordered stretches follow at residues 335–373 (PSLA…QKPV) and 452–481 (GVEI…NKRR). Composition is skewed to polar residues over residues 345–368 (ISST…TQPK) and 467–481 (ATQS…NKRR).

In terms of assembly, belongs to the 40S cdc5-associated complex (or cwf complex), a spliceosome sub-complex reminiscent of a late-stage spliceosome composed of the U2, U5 and U6 snRNAs and at least brr2, cdc5, cwf2/prp3, cwf3/syf1, cwf4/syf3, cwf5/ecm2, spp42/cwf6, cwf7/spf27, cwf8, cwf9, cwf10, cwf11, cwf12, prp45/cwf13, cwf14, cwf15, cwf16, cwf17, cwf18, cwf19, cwf20, cwf21, cwf22, cwf23, cwf24, cwf25, cwf26, cyp7/cwf27, cwf28, cwf29/ist3, lea1, msl1, prp5/cwf1, prp10, prp12/sap130, prp17, prp22, sap61, sap62, sap114, sap145, slu7, smb1, smd1, smd3, smf1, smg1 and syf2.

The protein resides in the nucleus. Its function is as follows. Involved in pre-mRNA splicing. May be involved in endoplasmic reticulum-associated protein degradation (ERAD) and required for growth at low and high temperatures. This Schizosaccharomyces pombe (strain 972 / ATCC 24843) (Fission yeast) protein is Pre-mRNA-splicing factor sap114 (sap114).